The following is an 86-amino-acid chain: Large ribosomal subunit protein bL31 (86 aa).

Residues 65–86 (YGMASSDSSEQKDKSSEEKKES) form a disordered region. Residues 73–86 (SEQKDKSSEEKKES) are compositionally biased toward basic and acidic residues.

This sequence belongs to the bacterial ribosomal protein bL31 family. Type A subfamily. In terms of assembly, part of the 50S ribosomal subunit.

Binds the 23S rRNA. The sequence is that of Large ribosomal subunit protein bL31 from Prochlorococcus marinus (strain NATL2A).